A 108-amino-acid polypeptide reads, in one-letter code: uncharacterized protein (108 aa).

A helical membrane pass occupies residues 72–94 (LGLHTSVFFFLRIVCMSSAASVF).

The protein localises to the membrane. This is an uncharacterized protein from Saccharomyces cerevisiae (strain ATCC 204508 / S288c) (Baker's yeast).